The sequence spans 185 residues: Capsid protein (185 aa).

Residues 136 to 185 (NAPILSTLPETTVVRRRDRGRSPRRRTPSPRRRRSPSPRRRRSQSRESQC) form a disordered region. The segment covering 149–178 (VRRRDRGRSPRRRTPSPRRRRSPSPRRRRS) has biased composition (basic residues). Residues Ser-157, Ser-164, and Ser-172 each carry the phosphoserine; by host modification. The stretch at 157–163 (SPRRRTP) is one 1; half-length repeat. A 3 X 8 AA repeats of S-P-R-R-R-[PR]-S-Q region spans residues 157-179 (SPRRRTPSPRRRRSPSPRRRRSQ). The Bipartite nuclear localization signal signature appears at 160–177 (RRTPSPRRRRSPSPRRRR). Tandem repeats lie at residues 164-171 (SPRRRRSP) and 172-179 (SPRRRRSQ). An RNA binding region spans residues 179-185 (QSRESQC).

Belongs to the orthohepadnavirus core antigen family. As to quaternary structure, homodimerizes, then multimerizes. Interacts with cytosol exposed regions of viral L glycoprotein present in the reticulum-to-Golgi compartment. Interacts with human FLNB. Phosphorylated form interacts with host importin alpha; this interaction depends on the exposure of the NLS, which itself depends upon genome maturation and/or phosphorylation of the capsid protein. Interacts with host NUP153. In terms of processing, phosphorylated by host SRPK1, SRPK2, and maybe protein kinase C or GAPDH. Phosphorylation is critical for pregenomic RNA packaging. Protein kinase C phosphorylation is stimulated by HBx protein and may play a role in transport of the viral genome to the nucleus at the late step during the viral replication cycle.

The protein resides in the virion. Its subcellular location is the host cytoplasm. In terms of biological role, self assembles to form an icosahedral capsid. Most capsids appear to be large particles with an icosahedral symmetry of T=4 and consist of 240 copies of capsid protein, though a fraction forms smaller T=3 particles consisting of 180 capsid proteins. Entering capsids are transported along microtubules to the nucleus. Phosphorylation of the capsid is thought to induce exposure of nuclear localization signal in the C-terminal portion of the capsid protein that allows binding to the nuclear pore complex via the importin (karyopherin-) alpha and beta. Capsids are imported in intact form through the nuclear pore into the nuclear basket, where it probably binds NUP153. Only capsids that contain the mature viral genome can release the viral DNA and capsid protein into the nucleoplasm. Immature capsids get stuck in the basket. Capsids encapsulate the pre-genomic RNA and the P protein. Pre-genomic RNA is reverse-transcribed into DNA while the capsid is still in the cytoplasm. The capsid can then either be directed to the nucleus, providing more genomes for transcription, or bud through the endoplasmic reticulum to provide new virions. The sequence is that of Capsid protein from Hepatitis B virus genotype A2 subtype adw2 (strain Rutter 1979) (HBV-A).